The following is a 293-amino-acid chain: 33 kDa chaperonin (293 aa).

Intrachain disulfides connect Cys236-Cys238 and Cys269-Cys272.

It belongs to the HSP33 family. Under oxidizing conditions two disulfide bonds are formed involving the reactive cysteines. Under reducing conditions zinc is bound to the reactive cysteines and the protein is inactive.

It is found in the cytoplasm. Its function is as follows. Redox regulated molecular chaperone. Protects both thermally unfolding and oxidatively damaged proteins from irreversible aggregation. Plays an important role in the bacterial defense system toward oxidative stress. The sequence is that of 33 kDa chaperonin from Lactobacillus delbrueckii subsp. bulgaricus (strain ATCC 11842 / DSM 20081 / BCRC 10696 / JCM 1002 / NBRC 13953 / NCIMB 11778 / NCTC 12712 / WDCM 00102 / Lb 14).